A 466-amino-acid polypeptide reads, in one-letter code: Ferrochelatase-1, chloroplastic/mitochondrial (466 aa).

Residues 1-11 are compositionally biased toward polar residues; the sequence is MQATALSSGFN. The disordered stretch occupies residues 1–23; that stretch reads MQATALSSGFNPLTKRKDHRFPR. A chloroplast and mitochondrion-targeting transit peptide spans 1–35; sequence MQATALSSGFNPLTKRKDHRFPRSCSQRNSLSLIQ.

The protein belongs to the ferrochelatase family. Expressed in roots, leaves, stems and flowers. Present in both leaves and roots.

The protein localises to the plastid. It is found in the chloroplast membrane. It localises to the chloroplast thylakoid membrane. Its subcellular location is the mitochondrion. It carries out the reaction heme b + 2 H(+) = protoporphyrin IX + Fe(2+). It participates in porphyrin-containing compound metabolism; protoheme biosynthesis; protoheme from protoporphyrin-IX: step 1/1. In terms of biological role, catalyzes the last step of heme biosynthesis by inserting ferrous iron into protoporphyrin IX to produce protoheme. Produces heme for photosynthetic cytochromes, but does not seem to be involved in stress responses. May be involved in wound-induced supply of heme to defensive hemoproteins outside plastids. Regulates the expression of photosynthesis-associated nuclear genes in undeveloped chloroplasts through production of heme. In Arabidopsis thaliana (Mouse-ear cress), this protein is Ferrochelatase-1, chloroplastic/mitochondrial.